The sequence spans 440 residues: Thymidine phosphorylase (440 aa).

It belongs to the thymidine/pyrimidine-nucleoside phosphorylase family. As to quaternary structure, homodimer.

It carries out the reaction thymidine + phosphate = 2-deoxy-alpha-D-ribose 1-phosphate + thymine. The protein operates within pyrimidine metabolism; dTMP biosynthesis via salvage pathway; dTMP from thymine: step 1/2. Functionally, the enzymes which catalyze the reversible phosphorolysis of pyrimidine nucleosides are involved in the degradation of these compounds and in their utilization as carbon and energy sources, or in the rescue of pyrimidine bases for nucleotide synthesis. This is Thymidine phosphorylase from Shigella boydii serotype 4 (strain Sb227).